Consider the following 262-residue polypeptide: GTP cyclohydrolase 1 type 2 homolog (262 aa).

Residues His-65, Asp-102, His-222, and Glu-225 each contribute to the a divalent metal cation site.

Belongs to the GTP cyclohydrolase I type 2/NIF3 family. Homohexamer.

This chain is GTP cyclohydrolase 1 type 2 homolog, found in Streptococcus pyogenes serotype M6 (strain ATCC BAA-946 / MGAS10394).